A 193-amino-acid chain; its full sequence is Pyridoxal 5'-phosphate synthase subunit PdxT (193 aa).

52–54 (GES) lines the L-glutamine pocket. Cysteine 84 functions as the Nucleophile in the catalytic mechanism. L-glutamine-binding positions include arginine 111 and 139-140 (IR). Catalysis depends on charge relay system residues histidine 176 and glutamate 178.

It belongs to the glutaminase PdxT/SNO family. In the presence of PdxS, forms a dodecamer of heterodimers. Only shows activity in the heterodimer.

The catalysed reaction is aldehydo-D-ribose 5-phosphate + D-glyceraldehyde 3-phosphate + L-glutamine = pyridoxal 5'-phosphate + L-glutamate + phosphate + 3 H2O + H(+). The enzyme catalyses L-glutamine + H2O = L-glutamate + NH4(+). Its pathway is cofactor biosynthesis; pyridoxal 5'-phosphate biosynthesis. Catalyzes the hydrolysis of glutamine to glutamate and ammonia as part of the biosynthesis of pyridoxal 5'-phosphate. The resulting ammonia molecule is channeled to the active site of PdxS. This Pasteurella multocida (strain Pm70) protein is Pyridoxal 5'-phosphate synthase subunit PdxT.